The following is a 272-amino-acid chain: Leucoagglutinating phytohemagglutinin (272 aa).

A signal peptide spans Met-1–Ser-20. Asn-32 is a glycosylation site (N-linked (GlcNAc...) (high mannose) asparagine). Residue Asn-80 is glycosylated (N-linked (GlcNAc...) (complex) asparagine).

It belongs to the leguminous lectin family. In terms of assembly, homotetramer. In terms of processing, N-glycosylated on Asn-80; contains xylose.

Functionally, this insecticidal carbohydrate-binding lectin is toxic for the cowpea weevil. In Phaseolus vulgaris (Kidney bean), this protein is Leucoagglutinating phytohemagglutinin (DLEC2).